The sequence spans 280 residues: Bicarbonate transport system permease protein CmpB (280 aa).

A run of 7 helical transmembrane segments spans residues 32 to 52 (PIFG…AGLI), 99 to 119 (YSLA…QPLL), 126 to 146 (IFQF…LVAL), 153 to 173 (AIFV…TEGV), 198 to 218 (ILIP…IGLA), 219 to 239 (WLAI…GFFI), and 251 to 271 (IILA…GIAY). The 179-residue stretch at 88-266 (TLASLGRVAQ…YIGAVGLLLD (179 aa)) folds into the ABC transmembrane type-1 domain.

Belongs to the binding-protein-dependent transport system permease family. The complex is composed of two ATP-binding proteins (CmpC and CmpD), a transmembrane protein (CmpB) and a solute-binding protein (CmpA).

It localises to the cell inner membrane. Part of the ABC transporter complex CmpABCD involved in bicarbonate transport. Probably responsible for the translocation of the substrate across the membrane. The sequence is that of Bicarbonate transport system permease protein CmpB (cmpB) from Synechocystis sp. (strain ATCC 27184 / PCC 6803 / Kazusa).